The chain runs to 552 residues: Amino-acid acetyltransferase, mitochondrial (552 aa).

The N-terminal 32 residues, Met1–Ser32, are a transit peptide targeting the mitochondrion. The region spanning Gln379–Asp545 is the N-acetyltransferase domain.

It belongs to the acetyltransferase family.

Its subcellular location is the mitochondrion. It carries out the reaction L-glutamate + acetyl-CoA = N-acetyl-L-glutamate + CoA + H(+). Its pathway is amino-acid biosynthesis; L-arginine biosynthesis; N(2)-acetyl-L-ornithine from L-glutamate: step 1/4. Its function is as follows. N-acetylglutamate synthase involved in arginine biosynthesis. This chain is Amino-acid acetyltransferase, mitochondrial (ARG2), found in Kluyveromyces lactis (strain ATCC 8585 / CBS 2359 / DSM 70799 / NBRC 1267 / NRRL Y-1140 / WM37) (Yeast).